A 361-amino-acid chain; its full sequence is Phosphoserine aminotransferase (361 aa).

An L-glutamate-binding site is contributed by Arg-42. Pyridoxal 5'-phosphate contacts are provided by residues 76–77 (AR), Trp-102, Thr-153, Asp-173, and Gln-196. The residue at position 197 (Lys-197) is an N6-(pyridoxal phosphate)lysine. 238–239 (NT) is a binding site for pyridoxal 5'-phosphate.

It belongs to the class-V pyridoxal-phosphate-dependent aminotransferase family. SerC subfamily. Homodimer. The cofactor is pyridoxal 5'-phosphate.

The protein localises to the cytoplasm. The enzyme catalyses O-phospho-L-serine + 2-oxoglutarate = 3-phosphooxypyruvate + L-glutamate. The catalysed reaction is 4-(phosphooxy)-L-threonine + 2-oxoglutarate = (R)-3-hydroxy-2-oxo-4-phosphooxybutanoate + L-glutamate. The protein operates within amino-acid biosynthesis; L-serine biosynthesis; L-serine from 3-phospho-D-glycerate: step 2/3. Its pathway is cofactor biosynthesis; pyridoxine 5'-phosphate biosynthesis; pyridoxine 5'-phosphate from D-erythrose 4-phosphate: step 3/5. Functionally, catalyzes the reversible conversion of 3-phosphohydroxypyruvate to phosphoserine and of 3-hydroxy-2-oxo-4-phosphonooxybutanoate to phosphohydroxythreonine. The protein is Phosphoserine aminotransferase of Yersinia pestis bv. Antiqua (strain Angola).